The primary structure comprises 110 residues: UPF0060 membrane protein Bpet0062 (110 aa).

4 helical membrane passes run 7 to 27 (LGLF…PYLW), 33 to 53 (SAWL…LLTL), 63 to 83 (AAYG…VDGV), and 86 to 106 (ATTD…IMAG).

It belongs to the UPF0060 family.

Its subcellular location is the cell inner membrane. The protein is UPF0060 membrane protein Bpet0062 of Bordetella petrii (strain ATCC BAA-461 / DSM 12804 / CCUG 43448).